A 313-amino-acid polypeptide reads, in one-letter code: Ribosomal RNA small subunit methyltransferase H (313 aa).

S-adenosyl-L-methionine is bound by residues 34 to 36, D55, F82, D103, and Q110; that span reads GGH.

This sequence belongs to the methyltransferase superfamily. RsmH family.

Its subcellular location is the cytoplasm. It catalyses the reaction cytidine(1402) in 16S rRNA + S-adenosyl-L-methionine = N(4)-methylcytidine(1402) in 16S rRNA + S-adenosyl-L-homocysteine + H(+). In terms of biological role, specifically methylates the N4 position of cytidine in position 1402 (C1402) of 16S rRNA. The polypeptide is Ribosomal RNA small subunit methyltransferase H (Pelobacter propionicus (strain DSM 2379 / NBRC 103807 / OttBd1)).